Here is a 445-residue protein sequence, read N- to C-terminus: Phosphoglucosamine mutase (445 aa).

The Phosphoserine intermediate role is filled by serine 99. Mg(2+)-binding residues include serine 99, aspartate 242, aspartate 244, and aspartate 246. Residue serine 99 is modified to Phosphoserine.

The protein belongs to the phosphohexose mutase family. Mg(2+) serves as cofactor. Activated by phosphorylation.

The enzyme catalyses alpha-D-glucosamine 1-phosphate = D-glucosamine 6-phosphate. Its function is as follows. Catalyzes the conversion of glucosamine-6-phosphate to glucosamine-1-phosphate. In Helicobacter pylori (strain G27), this protein is Phosphoglucosamine mutase.